The primary structure comprises 400 residues: NADH dehydrogenase-like protein Rv1812c (400 aa).

The protein belongs to the NADH dehydrogenase family. FAD is required as a cofactor.

This is NADH dehydrogenase-like protein Rv1812c from Mycobacterium tuberculosis (strain ATCC 25618 / H37Rv).